The following is a 442-amino-acid chain: Putative aminohydrolase SsnA (442 aa).

Positions 62, 64, 227, and 312 each coordinate Zn(2+).

It belongs to the metallo-dependent hydrolases superfamily. ATZ/TRZ family.

This is Putative aminohydrolase SsnA (ssnA) from Escherichia coli (strain K12).